The chain runs to 837 residues: Semaphorin-4B (837 aa).

Positions M1 to A43 are cleaved as a signal peptide. Over L44 to E717 the chain is Extracellular. The region spanning R47–M523 is the Sema domain. N-linked (GlcNAc...) asparagine glycosylation is found at N69 and N96. 2 cysteine pairs are disulfide-bonded: C120–C131 and C149–C158. Residue N165 is glycosylated (N-linked (GlcNAc...) asparagine). 2 disulfides stabilise this stretch: C286/C399 and C310/C359. N-linked (GlcNAc...) asparagine glycosylation is found at N410 and N525. The PSI domain occupies N525–S579. Cystine bridges form between C526–C543 and C611–C656. The Ig-like C2-type domain occupies N604–F663. An N-linked (GlcNAc...) asparagine glycan is attached at N630. A helical transmembrane segment spans residues F718 to Y738. The Cytoplasmic portion of the chain corresponds to R739–V837. The segment at P767–K805 is disordered. Residues S793, S818, and S830 each carry the phosphoserine modification.

Belongs to the semaphorin family.

It localises to the membrane. Inhibits axonal extension by providing local signals to specify territories inaccessible for growing axons. The chain is Semaphorin-4B from Homo sapiens (Human).